The sequence spans 138 residues: Large ribosomal subunit protein bL17 (138 aa).

Belongs to the bacterial ribosomal protein bL17 family. In terms of assembly, part of the 50S ribosomal subunit. Contacts protein L32.

The chain is Large ribosomal subunit protein bL17 from Nitrobacter hamburgensis (strain DSM 10229 / NCIMB 13809 / X14).